The primary structure comprises 89 residues: Antimicrobial peptide Ar-AMP (89 aa).

A signal peptide spans 1 to 25 (MVNMKSVALIVIVMMAFMMVDPSMG). Residues 26 to 68 (AGECVQGRCPSGMCCSQFGYCGRGPKYCGRASTTVDHQADAAA) enclose the Chitin-binding type-1 domain. 3 cysteine pairs are disulfide-bonded: Cys29/Cys40, Cys34/Cys46, and Cys39/Cys53. Residues 56–89 (ASTTVDHQADAAAAAATKTANNPTDAKLAGAGSP) constitute a propeptide, removed in mature form.

Functionally, chitin-binding protein that inhibits the growth of the fungal pathogens B.cinerea, F.culmorum, H.sativum and A.consortiale, but not that of R.solani. Induces morphological changes in the fungal pathogens F.culmorum, H.sativum and R.solani, but not in A.consortiale and B.cinerea. Has antibacterial activity against the Gram-positive bacterium B.subtilis, but lacks antibacterial activity against the Gram-negative bacterium E.coli. The protein is Antimicrobial peptide Ar-AMP of Amaranthus retroflexus (Redroot amaranth).